The sequence spans 185 residues: Ribosome-recycling factor (185 aa).

It belongs to the RRF family.

The protein resides in the cytoplasm. Its function is as follows. Responsible for the release of ribosomes from messenger RNA at the termination of protein biosynthesis. May increase the efficiency of translation by recycling ribosomes from one round of translation to another. The chain is Ribosome-recycling factor from Heliobacterium modesticaldum (strain ATCC 51547 / Ice1).